The following is a 530-amino-acid chain: Chaperone Ric-8A (530 aa).

At Ser-435 the chain carries Phosphoserine. Thr-440 and Thr-442 each carry phosphothreonine. A phosphoserine mark is found at Ser-501, Ser-522, Ser-523, and Ser-527.

It belongs to the synembryn family. As to quaternary structure, interacts with GDP-bound G alpha proteins GNAI1, GNAO1 and GNAQ, and with GNA13 with lower affinity. Does not interact with G-alpha proteins when they are in complex with subunits beta and gamma. Interacts (via C-terminus) with RGS14; the interaction stimulates the dissociation of the complex between RGS14 and the active GTP-bound form of GNAI1. Interacts with NCS1; interaction is favored in the absence of Ca(2+) and myristoylation of NCS1 is not required. In terms of tissue distribution, expressed in neurons and neurites of the CA1 and CA2 subregions of the hippocampus (at protein level). In adult brain, it is expressed in the neocortex, hippocampus and cerebellum as well as in the pineal gland and ependymal layer.

The protein resides in the cytoplasm. It localises to the cell cortex. In terms of biological role, chaperone that specifically binds and folds nascent G alpha proteins prior to G protein heterotrimer formation, promoting their stability and activity: folds GNAI1, GNAO1, GNA13 and GNAQ. Does not fold G(s) G-alpha proteins GNAS nor GNAL. Also acts as a guanine nucleotide exchange factor (GEF) for G alpha proteins by stimulating exchange of bound GDP for free GTP. Involved in regulation of microtubule pulling forces during mitotic movement of chromosomes by stimulating G(i)-alpha protein (GNAI1), possibly leading to release G(i)-alpha-GTP and NuMA proteins from the NuMA-GPSM2-G(i)-alpha-GDP complex. Also acts as an activator for G(q)-alpha (GNAQ) protein by enhancing the G(q)-coupled receptor-mediated ERK activation. This is Chaperone Ric-8A from Mus musculus (Mouse).